We begin with the raw amino-acid sequence, 125 residues long: Large ribosomal subunit protein bL21 (125 aa).

Belongs to the bacterial ribosomal protein bL21 family. As to quaternary structure, part of the 50S ribosomal subunit. Contacts protein L20.

Functionally, this protein binds to 23S rRNA in the presence of protein L20. This Synechococcus sp. (strain CC9311) protein is Large ribosomal subunit protein bL21.